Here is a 494-residue protein sequence, read N- to C-terminus: Alpha-amylase-related protein (494 aa).

The first 20 residues, 1-20 (MFKFATAVILCLVAASSTLA), serve as a signal peptide directing secretion. The residue at position 21 (glutamine 21) is a Pyrrolidone carboxylic acid. Cysteine 48 and cysteine 104 are disulfide-bonded. Residues asparagine 118, glutamine 169, and aspartate 178 each coordinate Ca(2+). A disulfide bond links cysteine 157 and cysteine 171. Arginine 206 is a binding site for chloride. The active-site Nucleophile is aspartate 208. Histidine 212 lines the Ca(2+) pocket. The Proton donor role is filled by glutamate 245. 2 residues coordinate chloride: asparagine 308 and arginine 343. 3 disulfide bridges follow: cysteine 376/cysteine 382, cysteine 418/cysteine 441, and cysteine 448/cysteine 460.

This sequence belongs to the glycosyl hydrolase 13 family. In terms of assembly, monomer. Requires Ca(2+) as cofactor. It depends on chloride as a cofactor.

Its subcellular location is the secreted. It catalyses the reaction Endohydrolysis of (1-&gt;4)-alpha-D-glucosidic linkages in polysaccharides containing three or more (1-&gt;4)-alpha-linked D-glucose units.. The polypeptide is Alpha-amylase-related protein (Amyrel) (Drosophila bipectinata (Fruit fly)).